The following is a 374-amino-acid chain: C-X-C chemokine receptor type 5 (374 aa).

At methionine 1–proline 57 the chain is on the extracellular side. Asparagine 28 is a glycosylation site (N-linked (GlcNAc...) asparagine). A helical membrane pass occupies residues valine 58 to leucine 78. Residues glutamate 79–threonine 90 lie on the Cytoplasmic side of the membrane. The helical transmembrane segment at phenylalanine 91–alanine 111 threads the bilayer. The Extracellular portion of the chain corresponds to glutamate 112–threonine 126. A disulfide bridge connects residues cysteine 124 and cysteine 204. The chain crosses the membrane as a helical span at residues valine 127–valine 147. Residues aspartate 148 to histidine 169 are Cytoplasmic-facing. Residues isoleucine 170–alanine 190 traverse the membrane as a helical segment. Topologically, residues lysine 191–arginine 221 are extracellular. N-linked (GlcNAc...) asparagine glycosylation occurs at asparagine 198. Residues phenylalanine 222 to glycine 242 form a helical membrane-spanning segment. Over valine 243 to arginine 261 the chain is Cytoplasmic. A helical transmembrane segment spans residues valine 262–phenylalanine 282. The Extracellular segment spans residues leucine 283–isoleucine 306. A helical membrane pass occupies residues threonine 307–alanine 327. Residues glycine 328–phenylalanine 374 lie on the Cytoplasmic side of the membrane.

The protein belongs to the G-protein coupled receptor 1 family. In terms of tissue distribution, mainly in spleen, in resting B-cells.

The protein localises to the cell membrane. In terms of biological role, cytokine receptor that binds to B-lymphocyte chemoattractant (BLC). Involved in B-cell migration into B-cell follicles of spleen and Peyer patches but not into those of mesenteric or peripheral lymph nodes. This chain is C-X-C chemokine receptor type 5 (Cxcr5), found in Mus musculus (Mouse).